We begin with the raw amino-acid sequence, 93 residues long: Small ribosomal subunit protein uS19c (93 aa).

It belongs to the universal ribosomal protein uS19 family.

Its subcellular location is the plastid. The protein resides in the chloroplast. Protein S19 forms a complex with S13 that binds strongly to the 16S ribosomal RNA. In Zygnema circumcarinatum (Green alga), this protein is Small ribosomal subunit protein uS19c.